We begin with the raw amino-acid sequence, 251 residues long: Imidazole glycerol phosphate synthase subunit HisF (251 aa).

Catalysis depends on residues D11 and D130.

It belongs to the HisA/HisF family. As to quaternary structure, heterodimer of HisH and HisF.

It localises to the cytoplasm. The catalysed reaction is 5-[(5-phospho-1-deoxy-D-ribulos-1-ylimino)methylamino]-1-(5-phospho-beta-D-ribosyl)imidazole-4-carboxamide + L-glutamine = D-erythro-1-(imidazol-4-yl)glycerol 3-phosphate + 5-amino-1-(5-phospho-beta-D-ribosyl)imidazole-4-carboxamide + L-glutamate + H(+). The protein operates within amino-acid biosynthesis; L-histidine biosynthesis; L-histidine from 5-phospho-alpha-D-ribose 1-diphosphate: step 5/9. IGPS catalyzes the conversion of PRFAR and glutamine to IGP, AICAR and glutamate. The HisF subunit catalyzes the cyclization activity that produces IGP and AICAR from PRFAR using the ammonia provided by the HisH subunit. The chain is Imidazole glycerol phosphate synthase subunit HisF from Chlorobium luteolum (strain DSM 273 / BCRC 81028 / 2530) (Pelodictyon luteolum).